The following is a 436-amino-acid chain: Histidine--tRNA ligase (436 aa).

It belongs to the class-II aminoacyl-tRNA synthetase family. In terms of assembly, homodimer.

Its subcellular location is the cytoplasm. It carries out the reaction tRNA(His) + L-histidine + ATP = L-histidyl-tRNA(His) + AMP + diphosphate + H(+). This is Histidine--tRNA ligase from Psychrobacter sp. (strain PRwf-1).